A 348-amino-acid chain; its full sequence is Holliday junction branch migration complex subunit RuvB (348 aa).

Residues 1–10 are compositionally biased toward polar residues; sequence MAIVSSNAGS. The tract at residues 1-41 is disordered; it reads MAIVSSNAGSSAPRREPVLDAQPLPEESSGRPDDGLRPKRL. A large ATPase domain (RuvB-L) region spans residues 13-197; it reads PRREPVLDAQ…FGLIQRLEFY (185 aa). Residues 28–41 are compositionally biased toward basic and acidic residues; it reads SSGRPDDGLRPKRL. Residues leucine 36, arginine 37, glycine 78, lysine 81, threonine 82, threonine 83, arginine 187, tyrosine 197, and arginine 234 each contribute to the ATP site. Threonine 82 lines the Mg(2+) pocket. The small ATPAse domain (RuvB-S) stretch occupies residues 198–269; it reads GQEDLEAIVS…LVSQALSLHR (72 aa). Positions 272-348 are head domain (RuvB-H); the sequence is HRGLDAGDRR…RAHLREQEVA (77 aa). DNA-binding residues include arginine 327 and arginine 332.

The protein belongs to the RuvB family. Homohexamer. Forms an RuvA(8)-RuvB(12)-Holliday junction (HJ) complex. HJ DNA is sandwiched between 2 RuvA tetramers; dsDNA enters through RuvA and exits via RuvB. An RuvB hexamer assembles on each DNA strand where it exits the tetramer. Each RuvB hexamer is contacted by two RuvA subunits (via domain III) on 2 adjacent RuvB subunits; this complex drives branch migration. In the full resolvosome a probable DNA-RuvA(4)-RuvB(12)-RuvC(2) complex forms which resolves the HJ.

It is found in the cytoplasm. The enzyme catalyses ATP + H2O = ADP + phosphate + H(+). The RuvA-RuvB-RuvC complex processes Holliday junction (HJ) DNA during genetic recombination and DNA repair, while the RuvA-RuvB complex plays an important role in the rescue of blocked DNA replication forks via replication fork reversal (RFR). RuvA specifically binds to HJ cruciform DNA, conferring on it an open structure. The RuvB hexamer acts as an ATP-dependent pump, pulling dsDNA into and through the RuvAB complex. RuvB forms 2 homohexamers on either side of HJ DNA bound by 1 or 2 RuvA tetramers; 4 subunits per hexamer contact DNA at a time. Coordinated motions by a converter formed by DNA-disengaged RuvB subunits stimulates ATP hydrolysis and nucleotide exchange. Immobilization of the converter enables RuvB to convert the ATP-contained energy into a lever motion, pulling 2 nucleotides of DNA out of the RuvA tetramer per ATP hydrolyzed, thus driving DNA branch migration. The RuvB motors rotate together with the DNA substrate, which together with the progressing nucleotide cycle form the mechanistic basis for DNA recombination by continuous HJ branch migration. Branch migration allows RuvC to scan DNA until it finds its consensus sequence, where it cleaves and resolves cruciform DNA. This is Holliday junction branch migration complex subunit RuvB from Parasynechococcus marenigrum (strain WH8102).